The primary structure comprises 407 residues: Probable endo-beta-1,4-glucanase celB (407 aa).

An N-terminal signal peptide occupies residues 1 to 18 (MAQTLAAASLVLVPLVTA). Asn136 carries an N-linked (GlcNAc...) asparagine glycan. The Nucleophile role is filled by Glu216. The active-site Proton donor is the Glu221.

The protein belongs to the glycosyl hydrolase 7 (cellulase C) family.

It is found in the secreted. The catalysed reaction is Endohydrolysis of (1-&gt;4)-beta-D-glucosidic linkages in cellulose, lichenin and cereal beta-D-glucans.. Functionally, has endoglucanase activity on substrates containing beta-1,4 glycosidic bonds, like in carboxymethylcellulose (CMC), hydroxyethylcellulose (HEC) and beta-glucan. Involved in the degradation of complex natural cellulosic substrates. The chain is Probable endo-beta-1,4-glucanase celB (celB) from Aspergillus fumigatus (strain ATCC MYA-4609 / CBS 101355 / FGSC A1100 / Af293) (Neosartorya fumigata).